Reading from the N-terminus, the 212-residue chain is MSQSTIHKIAVKKRTETGKNENNRLRSSGMIPVNIIGAGVATSGAVNEKELAKMVHSGIRQSTLIELDVEGQGQQKVFVKEIQRFPEIDRIRHVDFYKVVPGQKIVTKIGIETTGVAKGSKTGGQFEHIIHEIRVKTIPEDLLENLTIDVTDLDVGDSIKISQLKVPASWEILINGDPIVTSVNKTKALLAAERAEAKGAAPDDAKAKKGKK.

Residues 1–25 form a disordered region; the sequence is MSQSTIHKIAVKKRTETGKNENNRL. Over residues 13 to 24 the composition is skewed to basic and acidic residues; it reads KRTETGKNENNR.

This sequence belongs to the bacterial ribosomal protein bL25 family. CTC subfamily. In terms of assembly, part of the 50S ribosomal subunit; part of the 5S rRNA/L5/L18/L25 subcomplex. Contacts the 5S rRNA. Binds to the 5S rRNA independently of L5 and L18.

Functionally, this is one of the proteins that binds to the 5S RNA in the ribosome where it forms part of the central protuberance. The sequence is that of Large ribosomal subunit protein bL25 from Leptospira borgpetersenii serovar Hardjo-bovis (strain JB197).